A 315-amino-acid polypeptide reads, in one-letter code: D-erythronate dehydrogenase (315 aa).

3 residues coordinate NAD(+): Ser-119, Tyr-143, and Lys-147. Tyr-143 (proton acceptor) is an active-site residue.

This sequence belongs to the NAD(P)-dependent epimerase/dehydratase family.

It carries out the reaction D-erythronate + NAD(+) = 2-dehydro-D-erythronate + NADH + H(+). Catalyzes oxidation of D-erythronate to 2-oxo-tetronate. Can use either NAD(+) or NADP(+) as cosubstrate, with a preference for NAD(+). The sequence is that of D-erythronate dehydrogenase from Haemophilus influenzae (strain ATCC 51907 / DSM 11121 / KW20 / Rd).